A 45-amino-acid chain; its full sequence is Large ribosomal subunit protein bL34 (45 aa).

Over residues 1–20 the composition is skewed to basic residues; it reads MSKRTYQPNKRKRLKTHGFR. Positions 1 to 45 are disordered; the sequence is MSKRTYQPNKRKRLKTHGFRSRMSTASGRRIISCRRRKNRETLTA.

It belongs to the bacterial ribosomal protein bL34 family.

This chain is Large ribosomal subunit protein bL34, found in Tropheryma whipplei (strain Twist) (Whipple's bacillus).